The primary structure comprises 141 residues: Nucleoside diphosphate kinase (141 aa).

Residues Lys11, Phe59, Arg87, Thr93, Arg104, and Asn114 each coordinate ATP. His117 (pros-phosphohistidine intermediate) is an active-site residue.

Belongs to the NDK family. As to quaternary structure, homotetramer. Requires Mg(2+) as cofactor.

The protein localises to the cytoplasm. The enzyme catalyses a 2'-deoxyribonucleoside 5'-diphosphate + ATP = a 2'-deoxyribonucleoside 5'-triphosphate + ADP. It catalyses the reaction a ribonucleoside 5'-diphosphate + ATP = a ribonucleoside 5'-triphosphate + ADP. Functionally, major role in the synthesis of nucleoside triphosphates other than ATP. The ATP gamma phosphate is transferred to the NDP beta phosphate via a ping-pong mechanism, using a phosphorylated active-site intermediate. This chain is Nucleoside diphosphate kinase, found in Paraburkholderia phymatum (strain DSM 17167 / CIP 108236 / LMG 21445 / STM815) (Burkholderia phymatum).